Consider the following 388-residue polypeptide: Nocturnin (388 aa).

Glu152 serves as a coordination point for Mg(2+). Substrate-binding positions include Glu152, 176 to 178 (KPW), Asn220, 243 to 246 (HLKA), 281 to 283 (DFN), and His371.

This sequence belongs to the CCR4/nocturin family. Mg(2+) is required as a cofactor. Expressed only in the photoreceptors of the retina. Expression is controlled by the retinal circadian clock.

The protein localises to the cytoplasm. It localises to the nucleus. Its subcellular location is the perinuclear region. The protein resides in the mitochondrion. The enzyme catalyses NADP(+) + H2O = phosphate + NAD(+). It carries out the reaction NADPH + H2O = phosphate + NADH. In terms of biological role, phosphatase which catalyzes the conversion of NADP(+) to NAD(+) and of NADPH to NADH. Shows a small preference for NADPH over NADP(+). Component of the circadian clock or downstream effector of clock function. Exhibits a high amplitude circadian rhythm with maximal levels in early evening. In constant darkness or constant light, the amplitude of the rhythm decreases. The polypeptide is Nocturnin (Xenopus laevis (African clawed frog)).